The chain runs to 88 residues: Pape peptide (88 aa).

A signal peptide spans 1–22 (MNRKTLLVIFFVTLLIAEEVNS). A propeptide spanning residues 23-45 (FRLGGFLKKIWRSKLVKRLRSKG) is cleaved from the precursor. A disordered region spans residues 49-88 (LKEALAPEPAPEPAPEPAPEAAPEAAPEPAAAAPERRRRR). A compositionally biased stretch (pro residues) spans 56–68 (EPAPEPAPEPAPE). PAPE repeat units follow at residues 57–60 (PAPE), 61–64 (PAPE), and 65–68 (PAPE). Residues 69-81 (AAPEAAPEPAAAA) are compositionally biased toward low complexity.

In terms of tissue distribution, expressed by the venom gland.

The protein localises to the secreted. The polypeptide is Pape peptide (Tityus serrulatus (Brazilian scorpion)).